The following is a 749-amino-acid chain: DNA topoisomerase 1 (749 aa).

The disordered stretch occupies residues 1 to 110 (MSDSEDVALS…PKKEDSVETD (110 aa)). Residues 62–75 (LSKEKVNNKVKDEL) are compositionally biased toward basic and acidic residues. Residues 79–94 (PVTPKKTPKISKTPVS) show a composition bias toward low complexity. The segment covering 101–110 (PKKEDSVETD) has biased composition (basic and acidic residues). 3 interaction with DNA regions span residues 338–339 (KY), 401–406 (RAGGEK), and 493–495 (TAK). Positions 345–749 (NSSIKGISDM…IESTDENWRF (405 aa)) constitute a Topo IB-type catalytic domain. Residue Tyr-707 is the O-(3'-phospho-DNA)-tyrosine intermediate of the active site.

The protein belongs to the type IB topoisomerase family.

It localises to the nucleus. The protein localises to the nucleolus. The protein resides in the nucleoplasm. The enzyme catalyses ATP-independent breakage of single-stranded DNA, followed by passage and rejoining.. Its function is as follows. Releases the supercoiling and torsional tension of DNA introduced during the DNA replication and transcription by transiently cleaving and rejoining one strand of the DNA duplex. Introduces a single-strand break via transesterification at the specific target site 5'-[CT]CCTTp site in duplex DNA. The scissile phosphodiester is attacked by the catalytic tyrosine of the enzyme, resulting in the formation of a DNA-(3'-phosphotyrosyl)-enzyme intermediate and the expulsion of a 5'-OH DNA strand. The free DNA strand then undergoes passage around the unbroken strand thus removing DNA supercoils. Finally, in the religation step, the DNA 5'-OH attacks the covalent intermediate to expel the active-site tyrosine and restore the DNA phosphodiester backbone. This is DNA topoisomerase 1 (TOP1) from Candidozyma auris (Yeast).